We begin with the raw amino-acid sequence, 897 residues long: Staphylococcal nuclease domain-containing protein 1 (897 aa).

TNase-like domains follow at residues 18-167 (QLQR…LWSE), 194-329 (KPVN…IWKD), 342-499 (RQFV…LHSK), and 528-663 (GRSE…LWAN). The 59-residue stretch at 732-790 (APRRGEFCIAKFADGEWYRARVEKVESPAKVHVFYIDYGNREVLSSTRLAALPPAFSTR) folds into the Tudor domain.

Its subcellular location is the cytoplasm. The sequence is that of Staphylococcal nuclease domain-containing protein 1 (snd1) from Danio rerio (Zebrafish).